A 500-amino-acid polypeptide reads, in one-letter code: Maturase K (500 aa).

Belongs to the intron maturase 2 family. MatK subfamily.

The protein resides in the plastid. It is found in the chloroplast. Usually encoded in the trnK tRNA gene intron. Probably assists in splicing its own and other chloroplast group II introns. The sequence is that of Maturase K from Adiantum capillus-veneris (Maidenhair fern).